The primary structure comprises 625 residues: Mesothelin (625 aa).

Positions 1–35 (MALPTARPLLGSCGSPICSRSFLLLLLSLGWIPRL) are cleaved as a signal peptide. Asn-93 carries an N-linked (GlcNAc...) asparagine glycan. Ser-202 bears the Phosphoserine mark. Cys-304 and Cys-328 are joined by a disulfide. N-linked (GlcNAc...) asparagine glycosylation is found at Asn-390, Asn-488, and Asn-517. Residue Ser-600 is the site of GPI-anchor amidated serine attachment. Positions 601–625 (SRASLLGPGFVLIWIPALLPALRLS) are cleaved as a propeptide — removed in mature form.

It belongs to the mesothelin family. Interacts with MUC16. In terms of processing, proteolytically cleaved by a furin-like convertase to generate megakaryocyte-potentiating factor (MPF), and the cleaved form of mesothelin. As to expression, highly expressed in lung and heart. Expressed at low levels in spleen, liver, kidney and testis. Present in lung (at protein level).

The protein resides in the cell membrane. It localises to the golgi apparatus. It is found in the secreted. Functionally, membrane-anchored forms may play a role in cellular adhesion. Its function is as follows. Megakaryocyte-potentiating factor (MPF) may potentiate megakaryocyte colony formation. The polypeptide is Mesothelin (Msln) (Mus musculus (Mouse)).